The following is a 313-amino-acid chain: N-acetyl-gamma-glutamyl-phosphate reductase (313 aa).

Residue cysteine 117 is part of the active site.

This sequence belongs to the NAGSA dehydrogenase family. Type 2 subfamily.

Its subcellular location is the cytoplasm. It catalyses the reaction N-acetyl-L-glutamate 5-semialdehyde + phosphate + NADP(+) = N-acetyl-L-glutamyl 5-phosphate + NADPH + H(+). The protein operates within amino-acid biosynthesis; L-arginine biosynthesis; N(2)-acetyl-L-ornithine from L-glutamate: step 3/4. Functionally, catalyzes the NADPH-dependent reduction of N-acetyl-5-glutamyl phosphate to yield N-acetyl-L-glutamate 5-semialdehyde. The sequence is that of N-acetyl-gamma-glutamyl-phosphate reductase from Burkholderia cenocepacia (strain ATCC BAA-245 / DSM 16553 / LMG 16656 / NCTC 13227 / J2315 / CF5610) (Burkholderia cepacia (strain J2315)).